A 373-amino-acid polypeptide reads, in one-letter code: MSEKKINLLDLDRKAMRALFADMGEKPFRADQLMKWLYHFGVSDFEEMTNINKVLRQKLAARCEIVAPEISSFQKSTDGTIKFAINVGQGQEVETVYIPEDDRATLCVSSQVGCALECTFCSTGQQGFNRNLTVSEIVGQIWRVSHFLGFAKDTGERPITNVVMMGMGEPLLNLANVIPAMDIMLDDFGFSLSKRRVTLSTSGVVPALDKLGDALDVALAVSIHAPNDELRDILVPINKKYPLDEFLAGIRRYIAKSNANRGRVTVEYVMLDHINDSTDQAHELAKLMKDTPCKINLIPFNPYPGSPYGRSSNSRIDRFSKVLMEYGFTVIVRKTRGDDIDAACGQLAGDIRDRTKRLAKKRMQENQISVTMN.

The active-site Proton acceptor is Glu-94. Residues 100–339 enclose the Radical SAM core domain; sequence EDDRATLCVS…VIVRKTRGDD (240 aa). Cys-107 and Cys-344 are joined by a disulfide. 3 residues coordinate [4Fe-4S] cluster: Cys-114, Cys-118, and Cys-121. S-adenosyl-L-methionine is bound by residues 168–169, Ser-200, 222–224, and Asn-301; these read GE and SIH. Residue Cys-344 is the S-methylcysteine intermediate of the active site.

It belongs to the radical SAM superfamily. RlmN family. It depends on [4Fe-4S] cluster as a cofactor.

It localises to the cytoplasm. The enzyme catalyses adenosine(2503) in 23S rRNA + 2 reduced [2Fe-2S]-[ferredoxin] + 2 S-adenosyl-L-methionine = 2-methyladenosine(2503) in 23S rRNA + 5'-deoxyadenosine + L-methionine + 2 oxidized [2Fe-2S]-[ferredoxin] + S-adenosyl-L-homocysteine. The catalysed reaction is adenosine(37) in tRNA + 2 reduced [2Fe-2S]-[ferredoxin] + 2 S-adenosyl-L-methionine = 2-methyladenosine(37) in tRNA + 5'-deoxyadenosine + L-methionine + 2 oxidized [2Fe-2S]-[ferredoxin] + S-adenosyl-L-homocysteine. Functionally, specifically methylates position 2 of adenine 2503 in 23S rRNA and position 2 of adenine 37 in tRNAs. m2A2503 modification seems to play a crucial role in the proofreading step occurring at the peptidyl transferase center and thus would serve to optimize ribosomal fidelity. In Shewanella baltica (strain OS185), this protein is Dual-specificity RNA methyltransferase RlmN.